The primary structure comprises 102 residues: Legumin-like protein Mac i 2 (102 aa).

Belongs to the 11S seed storage protein (globulins) family.

Seed storage protein. This is Legumin-like protein Mac i 2 from Macadamia integrifolia (Macadamia nut).